The primary structure comprises 152 residues: ADP-ribose glycohydrolase OARD1 (152 aa).

The residue at position 2 (A2) is an N-acetylalanine. Positions 2–152 (ASSLNEDPEG…TDIKITVYTL (151 aa)) constitute a Macro domain. S4 carries the phosphoserine modification. L21 is a substrate binding site. Catalysis depends on K84, which acts as the Nucleophile. Substrate is bound by residues 119-125 (RIGCGLD) and L152. D125 acts as the Proton acceptor in catalysis.

Ubiquitous.

It is found in the nucleus. It localises to the nucleoplasm. The protein resides in the nucleolus. Its subcellular location is the chromosome. It catalyses the reaction 2''-O-acetyl-ADP-D-ribose + H2O = ADP-D-ribose + acetate + H(+). The enzyme catalyses 5-O-(ADP-D-ribosyl)-L-glutamyl-[protein] + H2O = L-glutamyl-[protein] + ADP-D-ribose + H(+). It carries out the reaction alpha-NAD(+) + H2O = ADP-D-ribose + nicotinamide + H(+). Its activity is regulated as follows. Subject to competitive inhibition by the product ADP-ribose. Its function is as follows. ADP-ribose glycohydrolase that hydrolyzes ADP-ribose and acts on different substrates, such as proteins ADP-ribosylated on glutamate and O-acetyl-ADP-D-ribose. Specifically acts as a glutamate mono-ADP-ribosylhydrolase by mediating the removal of mono-ADP-ribose attached to glutamate residues on proteins. Does not act on poly-ADP-ribosylated proteins: the poly-ADP-ribose chain of poly-ADP-ribosylated glutamate residues must by hydrolyzed into mono-ADP-ribosylated glutamate by PARG to become a substrate for OARD1. Deacetylates O-acetyl-ADP ribose, a signaling molecule generated by the deacetylation of acetylated lysine residues in histones and other proteins. Catalyzes the deacylation of O-acetyl-ADP-ribose, O-propionyl-ADP-ribose and O-butyryl-ADP-ribose, yielding ADP-ribose plus acetate, propionate and butyrate, respectively. This Homo sapiens (Human) protein is ADP-ribose glycohydrolase OARD1.